The primary structure comprises 526 residues: Probable Xaa-Pro aminopeptidase GLRG_02280 (526 aa).

Mn(2+)-binding residues include Asp285, Asp296, Glu454, and Glu495.

It belongs to the peptidase M24B family. Mn(2+) is required as a cofactor.

It carries out the reaction Release of any N-terminal amino acid, including proline, that is linked to proline, even from a dipeptide or tripeptide.. In terms of biological role, catalyzes the removal of a penultimate prolyl residue from the N-termini of peptides. The chain is Probable Xaa-Pro aminopeptidase GLRG_02280 from Colletotrichum graminicola (strain M1.001 / M2 / FGSC 10212) (Maize anthracnose fungus).